The sequence spans 590 residues: L-fucose isomerase (590 aa).

Active-site proton acceptor residues include glutamate 337 and aspartate 361. The Mn(2+) site is built by glutamate 337, aspartate 361, and histidine 528.

It belongs to the L-fucose isomerase family. Requires Mn(2+) as cofactor.

It localises to the cytoplasm. It carries out the reaction L-fucose = L-fuculose. The protein operates within carbohydrate degradation; L-fucose degradation; L-lactaldehyde and glycerone phosphate from L-fucose: step 1/3. Functionally, converts the aldose L-fucose into the corresponding ketose L-fuculose. This is L-fucose isomerase from Bacteroides fragilis (strain YCH46).